A 95-amino-acid polypeptide reads, in one-letter code: F(1)-ATPase inhibitor IF(1), mitochondrial (95 aa).

The N-terminal 25 residues, 1 to 25 (MLRTTVSKLARPTVSRAFATTSRAL), are a transit peptide targeting the mitochondrion. Disordered stretches follow at residues 20–48 (TTSRALAGETGAPPKTGGPGDAFQRREKA) and 76–95 (LKTLSDHIDEITREQGGERN).

Belongs to the ATPase inhibitor family. Associates with the mitochondrial small ribosomal subunit (mt-SSU). IF(1) coiled-coil forms a helical bundle with the C-terminal extension of uS17m and also binds to mS27 in the mtSSU tail. Since the C-terminal extension of uS17m stabilizing the IF(1) on the mt-SSU is specific to N.crassa, IF(1) binding might also be specific.

Its subcellular location is the mitochondrion. Functionally, endogenous F(1)F(0)-ATPase inhibitor limiting ATP depletion when the mitochondrial membrane potential falls below a threshold and the F(1)F(0)-ATP synthase starts hydrolyzing ATP to pump protons out of the mitochondrial matrix. Required to avoid the consumption of cellular ATP when the F(1)F(0)-ATP synthase enzyme acts as an ATP hydrolase. Functions through inserting its N-terminal part into the catalytically active F1-ATPase, thereby blocking its rotational movement and subsequently the ATP hydrolase activity. This chain is F(1)-ATPase inhibitor IF(1), mitochondrial (inh1), found in Neurospora crassa (strain ATCC 24698 / 74-OR23-1A / CBS 708.71 / DSM 1257 / FGSC 987).